The sequence spans 274 residues: Cytochrome b-c1 complex subunit Rieske, mitochondrial (274 aa).

Over 79 to 103 the chain is Mitochondrial matrix; that stretch reads SHTDVKVPDFSEYRRLEVLDSTKSS. Residues 104–140 traverse the membrane as a helical segment; sequence RESSEARKGFSYLVTGVTTVGVAYAAKNAVTQFVSSM. Residues 141–274 are Mitochondrial intermembrane-facing; sequence SASADVLALA…FTSDDMVIVG (134 aa). Residues 187–272 enclose the Rieske domain; it reads EAAVELSQLR…YEFTSDDMVI (86 aa). Residues cysteine 217, histidine 219, cysteine 236, histidine 239, and serine 241 each coordinate [2Fe-2S] cluster. Cysteine 222 and cysteine 238 are joined by a disulfide.

Belongs to the Rieske iron-sulfur protein family. Component of the ubiquinol-cytochrome c oxidoreductase (cytochrome b-c1 complex, complex III, CIII), a multisubunit enzyme composed of 11 subunits. The complex is composed of 3 respiratory subunits cytochrome b, cytochrome c1 and Rieske protein UQCRFS1, 2 core protein subunits UQCRC1/QCR1 and UQCRC2/QCR2, and 6 low-molecular weight protein subunits UQCRH/QCR6, UQCRB/QCR7, UQCRQ/QCR8, UQCR10/QCR9, UQCR11/QCR10 and subunit 9, the cleavage product of Rieske protein UQCRFS1. The complex exists as an obligatory dimer and forms supercomplexes (SCs) in the inner mitochondrial membrane with NADH-ubiquinone oxidoreductase (complex I, CI) and cytochrome c oxidase (complex IV, CIV), resulting in different assemblies (supercomplex SCI(1)III(2)IV(1) and megacomplex MCI(2)III(2)IV(2)). Incorporation of the Rieske protein UQCRFS1 is the penultimate step in complex III assembly. Interacts with TTC19, which is involved in the clearance of UQCRFS1 fragments. As to quaternary structure, component of the ubiquinol-cytochrome c oxidoreductase (cytochrome b-c1 complex, complex III, CIII). Subunit 9 corresponds to the mitochondrial targeting sequence (MTS) of Rieske protein UQCRFS1. It is retained after processing and incorporated inside complex III, where it remains bound to the complex and localizes between the 2 core subunits UQCRC1/QCR1 and UQCRC2/QCR2. Requires [2Fe-2S] cluster as cofactor. In terms of processing, proteolytic processing is necessary for the correct insertion of UQCRFS1 in the complex III dimer. Several fragments are generated during UQCRFS1 insertion, most probably due to the endogenous matrix-processing peptidase (MPP) activity of the 2 core protein subunits UQCRC1/QCR1 and UQCRC2/QCR2, which are homologous to the 2 mitochondrial-processing peptidase (MPP) subunits beta-MPP and alpha-MPP respectively. The action of the protease is also necessary for the clearance of the UQCRFS1 fragments.

It is found in the mitochondrion inner membrane. It catalyses the reaction a quinol + 2 Fe(III)-[cytochrome c](out) = a quinone + 2 Fe(II)-[cytochrome c](out) + 2 H(+)(out). Component of the ubiquinol-cytochrome c oxidoreductase, a multisubunit transmembrane complex that is part of the mitochondrial electron transport chain which drives oxidative phosphorylation. The respiratory chain contains 3 multisubunit complexes succinate dehydrogenase (complex II, CII), ubiquinol-cytochrome c oxidoreductase (cytochrome b-c1 complex, complex III, CIII) and cytochrome c oxidase (complex IV, CIV), that cooperate to transfer electrons derived from NADH and succinate to molecular oxygen, creating an electrochemical gradient over the inner membrane that drives transmembrane transport and the ATP synthase. The cytochrome b-c1 complex catalyzes electron transfer from ubiquinol to cytochrome c, linking this redox reaction to translocation of protons across the mitochondrial inner membrane, with protons being carried across the membrane as hydrogens on the quinol. In the process called Q cycle, 2 protons are consumed from the matrix, 4 protons are released into the intermembrane space and 2 electrons are passed to cytochrome c. The Rieske protein is a catalytic core subunit containing a [2Fe-2S] iron-sulfur cluster. It cycles between 2 conformational states during catalysis to transfer electrons from the quinol bound in the Q(0) site in cytochrome b to cytochrome c1. Incorporation of UQCRFS1 is the penultimate step in complex III assembly. Functionally, component of the ubiquinol-cytochrome c oxidoreductase (cytochrome b-c1 complex, complex III, CIII). UQCRFS1 undergoes proteolytic processing once it is incorporated in the complex III dimer. One of the fragments, called subunit 9, corresponds to its mitochondrial targeting sequence (MTS). The proteolytic processing is necessary for the correct insertion of UQCRFS1 in the complex III dimer, but the persistence of UQCRFS1-derived fragments may prevent newly imported UQCRFS1 to be processed and assembled into complex III and is detrimental for the complex III structure and function. The sequence is that of Cytochrome b-c1 complex subunit Rieske, mitochondrial (UQCRFS1) from Pan paniscus (Pygmy chimpanzee).